The primary structure comprises 111 residues: MADISMPKASAALGETSRAGASIDDAFLALSKVVFADGALDKRTKQLIAVAVAHVTQCPWCIEGHVKGARREGATNEQIMEAIWVAAEMRAGAAYAHANKALAVLDEIDGA.

This is an uncharacterized protein from Paracoccus denitrificans.